The chain runs to 220 residues: Ribonuclease P protein component 3 (220 aa).

The protein belongs to the eukaryotic/archaeal RNase P protein component 3 family. In terms of assembly, consists of a catalytic RNA component and at least 4-5 protein subunits.

The protein localises to the cytoplasm. It catalyses the reaction Endonucleolytic cleavage of RNA, removing 5'-extranucleotides from tRNA precursor.. In terms of biological role, part of ribonuclease P, a protein complex that generates mature tRNA molecules by cleaving their 5'-ends. The polypeptide is Ribonuclease P protein component 3 (Thermococcus kodakarensis (strain ATCC BAA-918 / JCM 12380 / KOD1) (Pyrococcus kodakaraensis (strain KOD1))).